The primary structure comprises 809 residues: Glycerol-3-phosphate acyltransferase (809 aa).

The short motif at 309–314 is the HXXXXD motif element; it reads HRSHMD.

It belongs to the GPAT/DAPAT family.

It localises to the cell inner membrane. The catalysed reaction is sn-glycerol 3-phosphate + an acyl-CoA = a 1-acyl-sn-glycero-3-phosphate + CoA. It functions in the pathway phospholipid metabolism; CDP-diacylglycerol biosynthesis; CDP-diacylglycerol from sn-glycerol 3-phosphate: step 1/3. In Shewanella oneidensis (strain ATCC 700550 / JCM 31522 / CIP 106686 / LMG 19005 / NCIMB 14063 / MR-1), this protein is Glycerol-3-phosphate acyltransferase.